The following is a 370-amino-acid chain: 3-dehydroquinate synthase (370 aa).

Residues 112–116 (GVVGD), 136–137 (TS), K149, K158, and 176–179 (TLRT) each bind NAD(+). Residues E191, H254, and H276 each coordinate Zn(2+).

Belongs to the sugar phosphate cyclases superfamily. Dehydroquinate synthase family. NAD(+) serves as cofactor. The cofactor is Co(2+). Requires Zn(2+) as cofactor.

It localises to the cytoplasm. It catalyses the reaction 7-phospho-2-dehydro-3-deoxy-D-arabino-heptonate = 3-dehydroquinate + phosphate. It functions in the pathway metabolic intermediate biosynthesis; chorismate biosynthesis; chorismate from D-erythrose 4-phosphate and phosphoenolpyruvate: step 2/7. Its function is as follows. Catalyzes the conversion of 3-deoxy-D-arabino-heptulosonate 7-phosphate (DAHP) to dehydroquinate (DHQ). This Xanthomonas axonopodis pv. citri (strain 306) protein is 3-dehydroquinate synthase.